The following is an 82-amino-acid chain: Small ribosomal subunit protein bS16 (82 aa).

This sequence belongs to the bacterial ribosomal protein bS16 family.

The polypeptide is Small ribosomal subunit protein bS16 (Glaesserella parasuis serovar 5 (strain SH0165) (Haemophilus parasuis)).